Consider the following 338-residue polypeptide: 1-aminocyclopropane-1-carboxylate deaminase (338 aa).

The residue at position 51 (K51) is an N6-(pyridoxal phosphate)lysine. Catalysis depends on S78, which acts as the Nucleophile.

It belongs to the ACC deaminase/D-cysteine desulfhydrase family. Homotrimer. Pyridoxal 5'-phosphate serves as cofactor.

The catalysed reaction is 1-aminocyclopropane-1-carboxylate + H2O = 2-oxobutanoate + NH4(+). In terms of biological role, catalyzes a cyclopropane ring-opening reaction, the irreversible conversion of 1-aminocyclopropane-1-carboxylate (ACC) to ammonia and alpha-ketobutyrate. Allows growth on ACC as a nitrogen source. The protein is 1-aminocyclopropane-1-carboxylate deaminase of Burkholderia ambifaria (strain MC40-6).